The sequence spans 807 residues: Phenylalanine--tRNA ligase beta subunit (807 aa).

The tRNA-binding domain occupies 39-156 (AGEFSGVVIG…SDAPLGQCVR (118 aa)). Positions 409–488 (PQTKDVNLRR…RIFGYNNIPN (80 aa)) constitute a B5 domain. The Mg(2+) site is built by aspartate 466, aspartate 472, glutamate 475, and glutamate 476. One can recognise an FDX-ACB domain in the interval 713 to 806 (SRFPANRRDL…LKTELNASLR (94 aa)).

It belongs to the phenylalanyl-tRNA synthetase beta subunit family. Type 1 subfamily. In terms of assembly, tetramer of two alpha and two beta subunits. The cofactor is Mg(2+).

The protein resides in the cytoplasm. It catalyses the reaction tRNA(Phe) + L-phenylalanine + ATP = L-phenylalanyl-tRNA(Phe) + AMP + diphosphate + H(+). This is Phenylalanine--tRNA ligase beta subunit from Colwellia psychrerythraea (strain 34H / ATCC BAA-681) (Vibrio psychroerythus).